A 619-amino-acid chain; its full sequence is TOX high mobility group box family member 4 (619 aa).

Disordered stretches follow at residues 153 to 227 and 304 to 337; these read LGLS…QKPV and DMDP…PPAL. Threonine 176 carries the post-translational modification Phosphothreonine. Serine 178, serine 181, and serine 182 each carry phosphoserine. Basic and acidic residues predominate over residues 183 to 193; sequence LHEDGVEEFRR. Basic residues predominate over residues 208–218; sequence KQKAPKKRKKK. The short motif at 213–218 is the Nuclear localization signal element; sequence KKRKKK. Residues 223-291 constitute a DNA-binding region (HMG box); that stretch reads PQKPVSAYAL…EYLKALAAYK (69 aa). Residues 307 to 319 are compositionally biased toward pro residues; that stretch reads PAPPSQTPSPPPV. Threonine 313 bears the Phosphothreonine mark. At serine 315 the chain carries Phosphoserine. The segment covering 320–337 has biased composition (low complexity); the sequence is AAADPASPAPASTEPPAL. The residue at position 479 (arginine 479) is an Asymmetric dimethylarginine. Residues 507 to 529 form a disordered region; that stretch reads PPPVESSPEQPVNNSPETHTVEE. Positions 512 to 524 are enriched in low complexity; sequence SSPEQPVNNSPET. Phosphoserine is present on residues serine 548, serine 550, serine 558, serine 560, and serine 565.

In terms of assembly, component of the PNUTS-PP1 phosphatase complex, composed of PPP1R10/PNUTS, TOX4, WDR82 and PPP1CA or PPP1CB or PPP1CC. Interacts with PPP1R10/PNUTS. Interacts with FOXO1 and CREB1 (increased by cAMP); FOXO1 and CREB1 are required for full induction of TOX4-dependent activity and the interactions are inhibited by insulin.

The protein resides in the nucleus. It is found in the chromosome. Its activity is regulated as follows. In liver, recruited to target gene promoters following treatment with dexamethasone and cAMP. Binding is decreased in presence of insulin. Transcription factor that modulates cell fate reprogramming from the somatic state to the pluripotent and neuronal fate. In liver, controls the expression of hormone-regulated gluconeogenic genes such as G6PC1 and PCK1. This regulation is independent of the insulin receptor activation. Also acts as a regulatory component of protein phosphatase 1 (PP1) complexes. Component of the PNUTS-PP1 protein phosphatase complex, a PP1 complex that regulates RNA polymerase II transcription pause-release. PNUTS-PP1 also plays a role in the control of chromatin structure and cell cycle progression during the transition from mitosis into interphase. The protein is TOX high mobility group box family member 4 (TOX4) of Bos taurus (Bovine).